The chain runs to 91 residues: Large ribosomal subunit protein bL27 (91 aa).

The disordered stretch occupies residues 1 to 22 (MAHKKGQGSSRNGRDSNPQYRG). Residues 7-19 (QGSSRNGRDSNPQ) show a composition bias toward polar residues.

This sequence belongs to the bacterial ribosomal protein bL27 family.

The polypeptide is Large ribosomal subunit protein bL27 (Myxococcus xanthus (strain DK1622)).